The primary structure comprises 367 residues: MGSGYQLLQLPRERFRKTSFLVWVIILFQRAISMPLGIVTNSTLKATEIDQLVCRDKLSSTSQLKSVGLNLEGNGIATDVPSATKRWGFRSGVPPKVVSYEAGEWAENCYNLEIKKSDGSECLPLPPDGVRGFPRCRYVHKVQGTGPCPGDLAFHKNGAFFLYDRLASTVIYRGTTFAEGVIAFLILSEPKKHFWKATPAHEPVNTTDDSTSYYMTLTLSYEMSNFGGEESNTLFKVDNHTYVQLDRPHTPQFLVQLNETLRRNNRLSNSTGRLTWTVDPKIEPDVGEWAFWETKKTFPNNFMEKTCISKFYQPTPTTPQIRARRELSKEKLATTHPPTTPSWFQRIPLQWFQCSLQDGQRKCRPKV.

Residues 1-33 (MGSGYQLLQLPRERFRKTSFLVWVIILFQRAIS) form the signal peptide. N41 carries an N-linked (GlcNAc...) asparagine; by host glycan. 2 cysteine pairs are disulfide-bonded: C109-C136 and C122-C148. N-linked (GlcNAc...) asparagine; by host glycans are attached at residues N205, N239, N258, and N269.

The protein belongs to the filoviruses glycoprotein family. As to quaternary structure, homodimer; disulfide-linked. The homodimers are linked by two disulfide bonds in a parallel orientation. Monomer. This precursor is processed into mature sGP and delta-peptide by host furin or furin-like proteases. The cleavage site corresponds to the furin optimal cleavage sequence [KR]-X-[KR]-R. Post-translationally, N-glycosylated. In terms of processing, O-glycosylated.

It localises to the secreted. In terms of biological role, seems to possess an anti-inflammatory activity as it can reverse the barrier-decreasing effects of TNF alpha. Might therefore contribute to the lack of inflammatory reaction seen during infection in spite the of extensive necrosis and massive virus production. Does not seem to be involved in activation of primary macrophages. Does not seem to interact specifically with neutrophils. Its function is as follows. Viroporin that permeabilizes mammalian cell plasma membranes. It acts by altering permeation of ionic compounds and small molecules. This activity may lead to viral enterotoxic activity. This Reston ebolavirus (strain Philippines-96) (REBOV) protein is Pre-small/secreted glycoprotein (GP).